We begin with the raw amino-acid sequence, 383 residues long: Chaperone protein DnaJ (383 aa).

Residues 5-70 form the J domain; sequence DYYKTLGVTQ…KKRTAYDQYG (66 aa). Residues 137 to 215 form a CR-type zinc finger; that stretch reads GTIKEIKIPT…CHGNGRIEIS (79 aa). Zn(2+)-binding residues include C150, C153, C167, C170, C189, C192, C203, and C206. CXXCXGXG motif repeat units lie at residues 150–157, 167–174, 189–196, and 203–210; these read CPTCYGYG, CPTCRGNG, CPQCHGEG, and CRRCHGNG.

Belongs to the DnaJ family. As to quaternary structure, homodimer. It depends on Zn(2+) as a cofactor.

Its subcellular location is the cytoplasm. Functionally, participates actively in the response to hyperosmotic and heat shock by preventing the aggregation of stress-denatured proteins and by disaggregating proteins, also in an autonomous, DnaK-independent fashion. Unfolded proteins bind initially to DnaJ; upon interaction with the DnaJ-bound protein, DnaK hydrolyzes its bound ATP, resulting in the formation of a stable complex. GrpE releases ADP from DnaK; ATP binding to DnaK triggers the release of the substrate protein, thus completing the reaction cycle. Several rounds of ATP-dependent interactions between DnaJ, DnaK and GrpE are required for fully efficient folding. Also involved, together with DnaK and GrpE, in the DNA replication of plasmids through activation of initiation proteins. This is Chaperone protein DnaJ from Buchnera aphidicola subsp. Baizongia pistaciae (strain Bp).